A 468-amino-acid chain; its full sequence is MAKQQIGVIGMAVMGRNLALNMERNQYTVSIFNRSLDITEKIILNNPNKNLFPFFSIKDFVLSLIVPRCIVLMIKSGVATDDTIKSLIPYLSKGDIIIDGGNTFYKDTIQRGYELLKIGVNLIGAGFSGGEKGALYGPSIMPGGRQEAYNYVSPILKKIASNSEGIPCVTYIGPDGSGHYVKMVHNGIEYGDMQLIAESYFILKTLLRLDNQSISKIFDIWNQGELNSYLIDITKDILIKKDDQNNYLIDCILDEGSSKGTGTWTTKSALDLNEPLTLITESVFFRYLSSLKSQRLLASKILCGPKDFFIVLNRDDFIEKIRQALYLGKIISYAQGFSQLNSASQKYNWNLKLGEISRIFQSGCIIRAKLLKNITQEYSSNNNFVNLLLTPYFREIANTYHSSLREIVSISVKYGIPIPALSSAISYFDSYRSAFLPSNLIQAQRDFFGAHTYKRIDKSGIFHTNWYS.

NADP(+)-binding positions include 10–15 (GMAVMG), 33–35 (NRS), 74–76 (IKS), and Asn102. Residues Asn102 and 128–130 (SGG) each bind substrate. Lys182 (proton acceptor) is an active-site residue. Residue 185-186 (HN) coordinates substrate. The Proton donor role is filled by Glu189. Substrate-binding residues include Tyr190, Lys259, Arg286, Arg445, and His451.

It belongs to the 6-phosphogluconate dehydrogenase family. In terms of assembly, homodimer.

It catalyses the reaction 6-phospho-D-gluconate + NADP(+) = D-ribulose 5-phosphate + CO2 + NADPH. It participates in carbohydrate degradation; pentose phosphate pathway; D-ribulose 5-phosphate from D-glucose 6-phosphate (oxidative stage): step 3/3. Catalyzes the oxidative decarboxylation of 6-phosphogluconate to ribulose 5-phosphate and CO(2), with concomitant reduction of NADP to NADPH. The sequence is that of 6-phosphogluconate dehydrogenase, decarboxylating (gnd) from Buchnera aphidicola subsp. Baizongia pistaciae (strain Bp).